A 228-amino-acid chain; its full sequence is Ribosomal RNA small subunit methyltransferase G (228 aa).

S-adenosyl-L-methionine-binding positions include glycine 89, leucine 94, valine 140–glutamate 141, and arginine 159.

This sequence belongs to the methyltransferase superfamily. RNA methyltransferase RsmG family.

It is found in the cytoplasm. It catalyses the reaction guanosine(527) in 16S rRNA + S-adenosyl-L-methionine = N(7)-methylguanosine(527) in 16S rRNA + S-adenosyl-L-homocysteine. In terms of biological role, specifically methylates the N7 position of guanine in position 527 of 16S rRNA. The sequence is that of Ribosomal RNA small subunit methyltransferase G from Burkholderia ambifaria (strain MC40-6).